A 457-amino-acid chain; its full sequence is ATP synthase subunit beta (457 aa).

Position 147–154 (147–154 (GGAGVGKT)) interacts with ATP.

It belongs to the ATPase alpha/beta chains family. In terms of assembly, F-type ATPases have 2 components, CF(1) - the catalytic core - and CF(0) - the membrane proton channel. CF(1) has five subunits: alpha(3), beta(3), gamma(1), delta(1), epsilon(1). CF(0) has three main subunits: a(1), b(2) and c(9-12). The alpha and beta chains form an alternating ring which encloses part of the gamma chain. CF(1) is attached to CF(0) by a central stalk formed by the gamma and epsilon chains, while a peripheral stalk is formed by the delta and b chains.

The protein resides in the cell inner membrane. The enzyme catalyses ATP + H2O + 4 H(+)(in) = ADP + phosphate + 5 H(+)(out). Functionally, produces ATP from ADP in the presence of a proton gradient across the membrane. The catalytic sites are hosted primarily by the beta subunits. This Actinobacillus pleuropneumoniae serotype 3 (strain JL03) protein is ATP synthase subunit beta.